Reading from the N-terminus, the 446-residue chain is NADH oxidase (446 aa).

FAD contacts are provided by residues 7–11, aspartate 32, cysteine 42, valine 79, 109–112, lysine 131, and tyrosine 158; these read GTNHA and ATGS. The Proton acceptor role is filled by histidine 10. Cysteine 42 (redox-active) is an active-site residue. Residue cysteine 42 is modified to Cysteine sulfinic acid (-SO2H). Isoleucine 159, aspartate 178, tyrosine 187, and glycine 244 together coordinate NAD(+). An FAD-binding site is contributed by aspartate 282. Alanine 298 provides a ligand contact to NAD(+). Residues leucine 299, alanine 300, and serine 301 each coordinate FAD. Glycine 329 serves as a coordination point for NAD(+). Position 427 (phenylalanine 427) interacts with FAD.

Belongs to the class-III pyridine nucleotide-disulfide oxidoreductase family. In terms of assembly, homodimer. It depends on FAD as a cofactor.

The catalysed reaction is 2 NADH + O2 + 2 H(+) = 2 NAD(+) + 2 H2O. Its activity is regulated as follows. Inhibited by hydrogen peroxide, sulfhydryl reagents and quinine, but not by EDTA. Catalyzes the four-electron reduction of molecular oxygen to water. Active on beta-NADH, but not on alpha-NADH, beta-NADPH or alpha-NADPH. Under aerobic conditions, oxygen acts as the electron acceptor. Under anaerobic conditions, DCIP and MB can replace oxygen as the electron acceptor. This chain is NADH oxidase, found in Lactococcus lactis subsp. cremoris (strain MG1363).